The sequence spans 262 residues: Indole-3-glycerol phosphate synthase (262 aa).

The protein belongs to the TrpC family.

It carries out the reaction 1-(2-carboxyphenylamino)-1-deoxy-D-ribulose 5-phosphate + H(+) = (1S,2R)-1-C-(indol-3-yl)glycerol 3-phosphate + CO2 + H2O. It participates in amino-acid biosynthesis; L-tryptophan biosynthesis; L-tryptophan from chorismate: step 4/5. The sequence is that of Indole-3-glycerol phosphate synthase from Bordetella avium (strain 197N).